A 935-amino-acid polypeptide reads, in one-letter code: C-1-tetrahydrofolate synthase, cytoplasmic (935 aa).

Methionine 1 is subject to N-acetylmethionine. Residues 2–291 (APAEILNGRE…MLMQSTVESA (290 aa)) form a methylenetetrahydrofolate dehydrogenase and methenyltetrahydrofolate cyclohydrolase (D/C) domain region. Substrate-binding positions include 52–56 (YINVK) and 99–101 (VQL). Lysine 56 is an active-site residue. NADP(+)-binding positions include 172–174 (GRS) and serine 197. A substrate-binding site is contributed by 272–276 (PGGVG). The formyltetrahydrofolate synthetase domain stretch occupies residues 310 to 935 (LNLKTPDPSD…PETQQVNGLF (626 aa)). Residue serine 318 is modified to Phosphoserine. 380 to 387 (TPLGEGKS) contributes to the ATP binding site. 2 positions are modified to phosphoserine: serine 413 and serine 490.

It in the N-terminal section; belongs to the tetrahydrofolate dehydrogenase/cyclohydrolase family. The protein in the C-terminal section; belongs to the formate--tetrahydrofolate ligase family. Homodimer.

It localises to the cytoplasm. The catalysed reaction is (6R)-5,10-methylene-5,6,7,8-tetrahydrofolate + NADP(+) = (6R)-5,10-methenyltetrahydrofolate + NADPH. The enzyme catalyses (6R)-5,10-methenyltetrahydrofolate + H2O = (6R)-10-formyltetrahydrofolate + H(+). It catalyses the reaction (6S)-5,6,7,8-tetrahydrofolate + formate + ATP = (6R)-10-formyltetrahydrofolate + ADP + phosphate. It functions in the pathway one-carbon metabolism; tetrahydrofolate interconversion. In terms of biological role, trifunctional enzyme that catalyzes the interconversion of three forms of one-carbon-substituted tetrahydrofolate: (6R)-5,10-methylene-5,6,7,8-tetrahydrofolate, 5,10-methenyltetrahydrofolate and (6S)-10-formyltetrahydrofolate. These derivatives of tetrahydrofolate are differentially required in nucleotide and amino acid biosynthesis, (6S)-10-formyltetrahydrofolate being required for purine biosynthesis while (6R)-5,10-methylene-5,6,7,8-tetrahydrofolate is used for serine and methionine biosynthesis for instance. The protein is C-1-tetrahydrofolate synthase, cytoplasmic (MTHFD1) of Pongo abelii (Sumatran orangutan).